The sequence spans 302 residues: Sulfate adenylyltransferase subunit 2 (302 aa).

The disordered stretch occupies residues 280–302 (RQGRLIDSDQSASMEQKKRQGYF).

Belongs to the PAPS reductase family. CysD subfamily. Heterodimer composed of CysD, the smaller subunit, and CysN.

The enzyme catalyses sulfate + ATP + H(+) = adenosine 5'-phosphosulfate + diphosphate. Its pathway is sulfur metabolism; hydrogen sulfide biosynthesis; sulfite from sulfate: step 1/3. Functionally, with CysN forms the ATP sulfurylase (ATPS) that catalyzes the adenylation of sulfate producing adenosine 5'-phosphosulfate (APS) and diphosphate, the first enzymatic step in sulfur assimilation pathway. APS synthesis involves the formation of a high-energy phosphoric-sulfuric acid anhydride bond driven by GTP hydrolysis by CysN coupled to ATP hydrolysis by CysD. The polypeptide is Sulfate adenylyltransferase subunit 2 (Shewanella oneidensis (strain ATCC 700550 / JCM 31522 / CIP 106686 / LMG 19005 / NCIMB 14063 / MR-1)).